The sequence spans 264 residues: Cell division protein FtsQ (264 aa).

Positions 1-24 (MAGPTTAERGDRQQESSGPPPARW) are disordered. Residues 1–31 (MAGPTTAERGDRQQESSGPPPARWSGTRRLR) lie on the Cytoplasmic side of the membrane. Residues 32–52 (ALVVLAALLVLLAGGCAWLLY) form a helical membrane-spanning segment. Topologically, residues 53 to 264 (GSSWLRLERV…VPTAPASSGS (212 aa)) are extracellular. Positions 57–126 (LRLERVSVSG…HGIGLKVTER (70 aa)) constitute a POTRA domain.

The protein belongs to the FtsQ/DivIB family. FtsQ subfamily.

The protein localises to the cell membrane. Its function is as follows. Essential cell division protein. The polypeptide is Cell division protein FtsQ (Streptomyces collinus).